The chain runs to 2368 residues: Voltage-dependent P/Q-type calcium channel subunit alpha-1A (2368 aa).

Residues 1–100 lie on the Cytoplasmic side of the membrane; it reads MARFGDEMPG…KYAKKITEWP (100 aa). One copy of the I repeat lies at 65-365; that stretch reads NPIPVRQNCL…LVLGVLSGEF (301 aa). A helical transmembrane segment spans residues 101-119; the sequence is PFEYMILATIIANCIVLAL. Residues 120 to 138 lie on the Extracellular side of the membrane; that stretch reads EQHLPDDDKTPMSERLDDT. Residues 139 to 156 traverse the membrane as a helical segment; the sequence is EPYFIGIFCFEAGIKIVA. At 157 to 168 the chain is on the cytoplasmic side; it reads LGFAFHKGSYLR. Residues 169–184 traverse the membrane as a helical segment; that stretch reads NGWNVMDFVVVLTGIL. Residues 185–192 lie on the Extracellular side of the membrane; that stretch reads ATVGTEFD. The helical transmembrane segment at 193–211 threads the bilayer; the sequence is LRTLRAVRVLRPLKLVSGI. The Cytoplasmic segment spans residues 212-230; sequence PSLQVVLKSIMKAMIPLLQ. Residues 231–250 traverse the membrane as a helical segment; sequence IGLLLFFAILIFAIIGLEFY. The Extracellular portion of the chain corresponds to 251–337; the sequence is MGKFHTTCFE…NSNDASGNTW (87 aa). A glycan (N-linked (GlcNAc...) asparagine) is linked at Asn-285. Glu-320 provides a ligand contact to Ca(2+). Residues 338–362 traverse the membrane as a helical segment; it reads NWLYFIPLIIIGSFFMLNLVLGVLS. The Cytoplasmic segment spans residues 363-489; that stretch reads GEFAKERERV…FYIRRMVKTQ (127 aa). A binding to the beta subunit region spans residues 385–402; it reads QQIERELNGYMEWISKAE. Thr-411 carries the post-translational modification Phosphothreonine. Residues Ser-450 and Ser-453 each carry the phosphoserine modification. One copy of the II repeat lies at 475–719; that stretch reads ERRMRFYIRR…VFLAIAVDNL (245 aa). The helical transmembrane segment at 490 to 509 threads the bilayer; the sequence is AFYWTVLSLVALNTLCVAIV. At 510 to 523 the chain is on the extracellular side; sequence HYNQPEWLSDFLYY. A helical transmembrane segment spans residues 524–543; that stretch reads AEFIFLGLFMSEMFIKMYGL. Over 544–551 the chain is Cytoplasmic; it reads GTRPYFHS. A helical transmembrane segment spans residues 552 to 570; that stretch reads SFNCFDCGVIIGSIFEVIW. Topologically, residues 571–580 are extracellular; it reads AVIKPGTSFG. A helical membrane pass occupies residues 581-599; sequence ISVLRALRLLRIFKVTKYW. Topologically, residues 600-618 are cytoplasmic; that stretch reads ASLRNLVVSLLNSMKSIIS. Residues 619–638 form a helical membrane-spanning segment; that stretch reads LLFLLFLFIVVFALLGMQLF. The Extracellular portion of the chain corresponds to 639–691; that stretch reads GGQFNFDEGTPPTNFDTFPAAIMTVFQILTGEDWNEVMYDGIKSQGGVQGGMV. Glu-670 is a binding site for Ca(2+). Residues 692–716 traverse the membrane as a helical segment; the sequence is FSIYFIVLTLFGNYTLLNVFLAIAV. Topologically, residues 717–1190 are cytoplasmic; that stretch reads DNLANAQELT…TNPLRRLCHY (474 aa). A phosphoserine mark is found at Ser-752 and Ser-755. The segment at 762-781 is disordered; that stretch reads AVKEQQKNQKPTKSVWEQRT. Over residues 769–779 the composition is skewed to polar residues; sequence NQKPTKSVWEQ. Ser-792 bears the Phosphoserine mark. Disordered regions lie at residues 823–1117 and 1137–1170; these read PLVV…RKPE and VNKN…KPMP. Composition is skewed to basic and acidic residues over residues 850–862, 871–924, and 932–958; these read RPRE…DARR, APGR…EGEP, and RPGD…RAAD. Phosphoserine occurs at positions 1038, 1042, and 1051. Polar residues predominate over residues 1056–1073; that stretch reads GNSTNPGPALATNPQNAA. Low complexity predominate over residues 1074 to 1083; the sequence is SRRTPNNPGN. Residues 1094–1111 show a composition bias toward polar residues; that stretch reads ENSLIVTNPSSTQPNSAK. Positions 1153–1163 are enriched in acidic residues; sequence KKEEEEADPGE. The stretch at 1182–1465 is one III repeat; it reads NPLRRLCHYI…IFVALIIITF (284 aa). The chain crosses the membrane as a helical span at residues 1191 to 1214; it reads ILNLRYFEMCILMVIAMSSIALAA. The Extracellular portion of the chain corresponds to 1215–1231; sequence EDPVQPNAPRNNVLRYF. The chain crosses the membrane as a helical span at residues 1232–1251; the sequence is DYVFTGVFTFEMVIKMIDLG. Residues 1252 to 1258 are Cytoplasmic-facing; sequence LVLHQGA. Residues 1259–1282 traverse the membrane as a helical segment; sequence YFRDLWNILDFIVVSGALVAFAFT. Topologically, residues 1283 to 1293 are extracellular; that stretch reads GNSKGKDINTI. A helical membrane pass occupies residues 1294 to 1311; the sequence is KSLRVLRVLRPLKTIKRL. Topologically, residues 1312–1330 are cytoplasmic; the sequence is PKLKAVFDCVVNSLKNVFN. Residues 1331–1350 form a helical membrane-spanning segment; that stretch reads ILIVYMLFMFIFAVVAVQLF. At 1351–1437 the chain is on the extracellular side; it reads KGKFFHCTDE…QGPSPGYRME (87 aa). Glu-1411 contributes to the Ca(2+) binding site. Residues 1438-1462 traverse the membrane as a helical segment; the sequence is MSIFYVVYFVVFPFFFVNIFVALII. At 1463-1518 the chain is on the cytoplasmic side; the sequence is ITFQEQGDKMMEEYSLEKNERACIDFAISAKPLTRHMPQNKQSFQYRMWQFVVSPP. Residues 1502 to 1765 form an IV repeat; the sequence is NKQSFQYRMW…LFVAVIMDNF (264 aa). The chain crosses the membrane as a helical span at residues 1519–1537; the sequence is FEYTIMAMIALNTIVLMMK. Residues 1538 to 1551 are Extracellular-facing; sequence FYGASVAYENALRV. Residues 1552–1573 form a helical membrane-spanning segment; the sequence is FNIVFTSLFSLECVLKVMAFGI. Topologically, residues 1574–1580 are cytoplasmic; it reads LNYFRDA. Residues 1581–1600 traverse the membrane as a helical segment; sequence WNIFDFVTVLGSITDILVTE. Residues 1601-1607 lie on the Extracellular side of the membrane; sequence FGNNFIN. N-linked (GlcNAc...) asparagine glycosylation occurs at Asn-1607. Residues 1608–1626 form a helical membrane-spanning segment; the sequence is LSFLRLFRAARLIKLLRQG. The Cytoplasmic segment spans residues 1627–1645; it reads YTIRILLWTFVQSFKALPY. The helical transmembrane segment at 1646–1665 threads the bilayer; sequence VCLLIAMLFFIYAIIGMQVF. Over 1666 to 1737 the chain is Extracellular; the sequence is GNIGIDGEDE…ILTADCGNEF (72 aa). A helical membrane pass occupies residues 1738 to 1763; sequence AYFYFVSFIFLCSFLMLNLFVAVIMD. Over 1764–2368 the chain is Cytoplasmic; it reads NFEYLTRDSS…AYSESEDDWC (605 aa). The residue at position 1935 (Thr-1935) is a Phosphothreonine. Residues 1940–2368 form a disordered region; sequence QRMEPPSPTQ…AYSESEDDWC (429 aa). Composition is skewed to polar residues over residues 1948–1963 and 1981–1997; these read TQEG…STQL and SWVT…TGTW. 6 positions are modified to phosphoserine: Ser-1998, Ser-2016, Ser-2028, Ser-2030, Ser-2071, and Ser-2091. The span at 2008–2017 shows a compositional bias: polar residues; that stretch reads PNSQPNSQSV. The segment covering 2018 to 2034 has biased composition (basic and acidic residues); that stretch reads EMREMGTDGYSDSEHYL. Residues 2063-2073 are compositionally biased toward polar residues; the sequence is DLSTISDTSPM. 2 stretches are compositionally biased toward basic and acidic residues: residues 2085–2102 and 2143–2153; these read RRLD…ENQR and PSKDRDQDRGR. Residues 2154–2172 show a composition bias toward basic residues; the sequence is PKDRKHRPHHHHHHHHHHP. Residues 2173 to 2209 show a composition bias toward basic and acidic residues; it reads PAPDRDRYAQERPDTGRARAREQRWSRSPSEGREHTT. Positions 2213–2231 are enriched in low complexity; that stretch reads GSSSVSGSPAPSTSGTSTP. The segment covering 2289-2305 has biased composition (basic and acidic residues); that stretch reads EGPRPRGADYTEPDSPR.

The protein belongs to the calcium channel alpha-1 subunit (TC 1.A.1.11) family. CACNA1A subfamily. As to quaternary structure, voltage-dependent calcium channels are multisubunit complexes, consisting of alpha-1, alpha-2, beta and delta subunits in a 1:1:1:1 ratio. The channel activity is directed by the pore-forming and voltage-sensitive alpha-1 subunit. In many cases, this subunit is sufficient to generate voltage-sensitive calcium channel activity. The auxiliary subunits beta and alpha-2/delta linked by a disulfide bridge regulate the channel activity. Interacts with CABP1. Interacts with the spider omega-agatoxin-IVA (AC P30288). Interacts with TSPOAP1. As to expression, brain specific; mainly found in the cerebellum, olfactory bulb, cerebral cortex, hippocampus, and inferior colliculus. In the hippocampus, expression occurs in pyramidal and granule neurons, as well as in interneurons. Purkinje cells contain predominantly P-type VSCC, the Q-type being a prominent calcium current in cerebellar granule cells.

It is found in the cell membrane. It carries out the reaction Ca(2+)(in) = Ca(2+)(out). Its function is as follows. Voltage-sensitive calcium channels (VSCC) mediate the entry of calcium ions into excitable cells and are also involved in a variety of calcium-dependent processes, including muscle contraction, hormone or neurotransmitter release, gene expression, cell motility, cell division and cell death. The isoform alpha-1A gives rise to P and/or Q-type calcium currents. P/Q-type calcium channels belong to the 'high-voltage activated' (HVA) group and are specifically blocked by the spider omega-agatoxin-IVA (AC P54282). They are however insensitive to dihydropyridines (DHP). This chain is Voltage-dependent P/Q-type calcium channel subunit alpha-1A, found in Mus musculus (Mouse).